The sequence spans 272 residues: 2-amino-3,7-dideoxy-D-threo-hept-6-ulosonate synthase (272 aa).

Asp-33 (proton acceptor) is an active-site residue. Residues 33-37 (DHGVS) and 153-155 (YPR) each bind 1-deoxy-D-threo-hexo-2,5-diulose 6-phosphate. Tyr-153 acts as the Proton donor in catalysis. Catalysis depends on Lys-184, which acts as the Schiff-base intermediate with substrate. Residues 209–210 (GG) and 237–238 (GR) contribute to the 1-deoxy-D-threo-hexo-2,5-diulose 6-phosphate site.

It belongs to the DeoC/FbaB aldolase family. ADHS subfamily. In terms of assembly, homodecamer.

The enzyme catalyses 1-deoxy-D-threo-hexo-2,5-diulose 6-phosphate + L-aspartate 4-semialdehyde = 2,3-dioxopropyl phosphate + 2-amino-2,3,7-trideoxy-D-lyxo-hept-6-ulosonate. In terms of biological role, catalyzes a transaldol reaction between 6-deoxy-5-ketofructose 1-phosphate (DKFP) and L-aspartate semialdehyde (ASA) with an elimination of hydroxypyruvaldehyde phosphate to yield 2-amino-3,7-dideoxy-D-threo-hept-6-ulosonate (ADH). Plays a key role in an alternative pathway of the biosynthesis of 3-dehydroquinate (DHQ), which is involved in the canonical pathway for the biosynthesis of aromatic amino acids. The sequence is that of 2-amino-3,7-dideoxy-D-threo-hept-6-ulosonate synthase from Methanococcus maripaludis (strain C5 / ATCC BAA-1333).